The sequence spans 120 residues: uncharacterized protein (120 aa).

This sequence to E.coli YiaW.

This is an uncharacterized protein from Escherichia coli (strain K12).